A 300-amino-acid polypeptide reads, in one-letter code: Epimerase family protein SACOL0834 (300 aa).

The protein belongs to the NAD(P)-dependent epimerase/dehydratase family. SDR39U1 subfamily.

This chain is Epimerase family protein SACOL0834, found in Staphylococcus aureus (strain COL).